Here is a 302-residue protein sequence, read N- to C-terminus: Probable alpha-L-glutamate ligase (302 aa).

Positions M104–E287 constitute an ATP-grasp domain. Residues K141, E178–F179, D187, and R211–N213 contribute to the ATP site. Mg(2+)-binding residues include D248, E260, and N262. The Mn(2+) site is built by D248, E260, and N262.

The protein belongs to the RimK family. Mg(2+) is required as a cofactor. Mn(2+) serves as cofactor.

The sequence is that of Probable alpha-L-glutamate ligase from Psychromonas ingrahamii (strain DSM 17664 / CCUG 51855 / 37).